Consider the following 233-residue polypeptide: Ribose-5-phosphate isomerase A (233 aa).

Substrate is bound by residues 28–31 (SGST), 83–86 (DGAD), and 96–99 (KGGG). Glutamate 105 acts as the Proton acceptor in catalysis. Lysine 123 is a substrate binding site.

Belongs to the ribose 5-phosphate isomerase family. As to quaternary structure, homodimer.

It carries out the reaction aldehydo-D-ribose 5-phosphate = D-ribulose 5-phosphate. Its pathway is carbohydrate degradation; pentose phosphate pathway; D-ribose 5-phosphate from D-ribulose 5-phosphate (non-oxidative stage): step 1/1. In terms of biological role, catalyzes the reversible conversion of ribose-5-phosphate to ribulose 5-phosphate. The chain is Ribose-5-phosphate isomerase A from Maricaulis maris (strain MCS10) (Caulobacter maris).